We begin with the raw amino-acid sequence, 425 residues long: MASSSLQSLFSLFCLALFSLPLIVSSIGINYGQVANNLPPPKNVIPLLKSVGATKVKLYDADPQALRAFAGSGFELTVALGNEYLAQMSDPIKAQGWVKENVQAYLPNTKIVAIVVGNEVLTSNQSALTAALFPAMQSIHGALVDCGLNKQIFVTTAHSLAILDVSYPPSATSFRRDLLGSLTPILDFHVKTGSPILINAYPFFAYEENPKHVSLDFVLFQPNQGFTDPGSNFHYDNMLFAQVDAVYHALDAVGISYKKVPIVVSETGWPSNGDPQEVGATCDNARKYNGNLIKMMMSKKMRTPIRPECDLTIFVFALFNENMKPGPTSERNYGLFNPDGTPVYSLGIKTSSTHSSGSGSSNSTGGSSSGGGGNTGGSSSGGGIYQPVTGNPSPDYMSISSAGGKGRFVECVLFFFLLCIIKLRL.

The first 26 residues, 1–26 (MASSSLQSLFSLFCLALFSLPLIVSS), serve as a signal peptide directing secretion. Glu119 serves as the catalytic Proton donor. N-linked (GlcNAc...) asparagine glycosylation occurs at Asn124. The Nucleophile role is filled by Glu266. The disordered stretch occupies residues 347 to 387 (GIKTSSTHSSGSGSSNSTGGSSSGGGGNTGGSSSGGGIYQP). Positions 350–366 (TSSTHSSGSGSSNSTGG) are enriched in low complexity. An N-linked (GlcNAc...) asparagine glycan is attached at Asn362. The span at 367 to 384 (SSSGGGGNTGGSSSGGGI) shows a compositional bias: gly residues. Residue Ser401 is the site of GPI-anchor amidated serine attachment. A propeptide spans 402-425 (AGGKGRFVECVLFFFLLCIIKLRL) (removed in mature form).

It belongs to the glycosyl hydrolase 17 family. In terms of tissue distribution, highly expressed in flowers and siliques.

It localises to the cell membrane. The protein localises to the cell junction. The protein resides in the plasmodesma. It catalyses the reaction Hydrolysis of (1-&gt;3)-beta-D-glucosidic linkages in (1-&gt;3)-beta-D-glucans.. In terms of biological role, plasmodesmal-associated membrane beta-1,3-glucanase involved in plasmodesmal callose degradation and functions in the gating of plasmodesmata. The protein is Glucan endo-1,3-beta-glucosidase 10 of Arabidopsis thaliana (Mouse-ear cress).